A 339-amino-acid polypeptide reads, in one-letter code: Dihydroorotate dehydrogenase (quinone) (339 aa).

FMN is bound by residues 62 to 66 (AGLDK) and Thr-86. Lys-66 contributes to the substrate binding site. 111–115 (NRMGF) contributes to the substrate binding site. FMN-binding residues include Asn-139 and Asn-172. Asn-172 serves as a coordination point for substrate. The Nucleophile role is filled by Ser-175. Asn-177 contributes to the substrate binding site. The FMN site is built by Lys-217 and Thr-245. Position 246-247 (246-247 (NT)) interacts with substrate. FMN contacts are provided by residues Gly-268, Gly-297, and 318 to 319 (YS).

The protein belongs to the dihydroorotate dehydrogenase family. Type 2 subfamily. As to quaternary structure, monomer. FMN is required as a cofactor.

It is found in the cell membrane. It carries out the reaction (S)-dihydroorotate + a quinone = orotate + a quinol. It participates in pyrimidine metabolism; UMP biosynthesis via de novo pathway; orotate from (S)-dihydroorotate (quinone route): step 1/1. In terms of biological role, catalyzes the conversion of dihydroorotate to orotate with quinone as electron acceptor. This is Dihydroorotate dehydrogenase (quinone) from Shewanella frigidimarina (strain NCIMB 400).